The chain runs to 303 residues: Glycosyltransferase AglJ (303 aa).

Helical transmembrane passes span 230–250 (FYFGSVGFASTATGLGLALYV) and 263–283 (VIAVVSMAGILFGVQLLMFGV).

This sequence belongs to the glycosyltransferase 2 family.

It localises to the cell membrane. Its pathway is cell surface structure biogenesis; S-layer biogenesis. In terms of biological role, involved in the assembly of a N-linked pentasaccharide that decorates the S-layer glycoprotein and flagellins. Adds the first hexose subunit of the pentasaccharide to the dolichol phosphate carrier. The sequence is that of Glycosyltransferase AglJ (aglJ) from Haloferax volcanii (strain ATCC 29605 / DSM 3757 / JCM 8879 / NBRC 14742 / NCIMB 2012 / VKM B-1768 / DS2) (Halobacterium volcanii).